The following is a 117-amino-acid chain: MKLCAVIIASLLVCVAVASSSDNQKEFAQEKEMTREETQSLGEHEKDDEVTGSEERSCIEEWKTCENDCECCGMSTLCAASWVDGHQIKLCRNEGGKLKKVLHFIQKSVSKIKSCRK.

Positions M1 to S20 are cleaved as a signal peptide. The interval S20–E55 is disordered. The propeptide occupies S21–R56. The span at N23–E55 shows a compositional bias: basic and acidic residues. Disulfide bonds link C58–C72, C65–C78, C69–C115, and C71–C91.

It belongs to the neurotoxin 03 (Tx2) family. 02 subfamily. HNTX-XV sub-subfamily. Expressed by the venom gland.

Its subcellular location is the secreted. Functionally, putative ion channel inhibitor. This is Hainantoxin-XV-5 from Cyriopagopus hainanus (Chinese bird spider).